We begin with the raw amino-acid sequence, 148 residues long: Histone H2A-like 3 (148 aa).

The disordered stretch occupies residues 101–128 (DDTHSQVEEMPQSEEEEEEEEEKEEEMV). Over residues 111-127 (PQSEEEEEEEEEKEEEM) the composition is skewed to acidic residues.

The protein belongs to the histone H2A family. As to quaternary structure, the nucleosome is a histone octamer containing two molecules each of H2A, H2B, H3 and H4 assembled in one H3-H4 heterotetramer and two H2A-H2B heterodimers. The octamer wraps approximately 147 bp of DNA.

The protein localises to the nucleus. The protein resides in the chromosome. Its function is as follows. Core component of nucleosome. Nucleosomes wrap and compact DNA into chromatin, limiting DNA accessibility to the cellular machineries which require DNA as a template. Histones thereby play a central role in transcription regulation, DNA repair, DNA replication and chromosomal stability. DNA accessibility is regulated via a complex set of post-translational modifications of histones, also called histone code, and nucleosome remodeling. The sequence is that of Histone H2A-like 3 from Homo sapiens (Human).